A 367-amino-acid polypeptide reads, in one-letter code: Peptide chain release factor 2 (367 aa).

Glutamine 249 carries the post-translational modification N5-methylglutamine.

It belongs to the prokaryotic/mitochondrial release factor family. Methylated by PrmC. Methylation increases the termination efficiency of RF2.

It localises to the cytoplasm. Functionally, peptide chain release factor 2 directs the termination of translation in response to the peptide chain termination codons UGA and UAA. The sequence is that of Peptide chain release factor 2 from Thermotoga sp. (strain RQ2).